Here is a 363-residue protein sequence, read N- to C-terminus: UDP-N-acetylglucosamine--N-acetylmuramyl-(pentapeptide) pyrophosphoryl-undecaprenol N-acetylglucosamine transferase (363 aa).

UDP-N-acetyl-alpha-D-glucosamine contacts are provided by residues threonine 12–glycine 14, serine 196, and glutamine 291.

The protein belongs to the glycosyltransferase 28 family. MurG subfamily.

It localises to the cell inner membrane. It carries out the reaction di-trans,octa-cis-undecaprenyl diphospho-N-acetyl-alpha-D-muramoyl-L-alanyl-D-glutamyl-meso-2,6-diaminopimeloyl-D-alanyl-D-alanine + UDP-N-acetyl-alpha-D-glucosamine = di-trans,octa-cis-undecaprenyl diphospho-[N-acetyl-alpha-D-glucosaminyl-(1-&gt;4)]-N-acetyl-alpha-D-muramoyl-L-alanyl-D-glutamyl-meso-2,6-diaminopimeloyl-D-alanyl-D-alanine + UDP + H(+). The protein operates within cell wall biogenesis; peptidoglycan biosynthesis. Its function is as follows. Cell wall formation. Catalyzes the transfer of a GlcNAc subunit on undecaprenyl-pyrophosphoryl-MurNAc-pentapeptide (lipid intermediate I) to form undecaprenyl-pyrophosphoryl-MurNAc-(pentapeptide)GlcNAc (lipid intermediate II). The chain is UDP-N-acetylglucosamine--N-acetylmuramyl-(pentapeptide) pyrophosphoryl-undecaprenol N-acetylglucosamine transferase from Legionella pneumophila (strain Corby).